We begin with the raw amino-acid sequence, 156 residues long: ATP synthase subunit b (156 aa).

Residues 12 to 32 traverse the membrane as a helical segment; the sequence is VAFLIFVLFCMKYVWPPVITA.

This sequence belongs to the ATPase B chain family. As to quaternary structure, F-type ATPases have 2 components, F(1) - the catalytic core - and F(0) - the membrane proton channel. F(1) has five subunits: alpha(3), beta(3), gamma(1), delta(1), epsilon(1). F(0) has three main subunits: a(1), b(2) and c(10-14). The alpha and beta chains form an alternating ring which encloses part of the gamma chain. F(1) is attached to F(0) by a central stalk formed by the gamma and epsilon chains, while a peripheral stalk is formed by the delta and b chains.

The protein localises to the cell inner membrane. In terms of biological role, f(1)F(0) ATP synthase produces ATP from ADP in the presence of a proton or sodium gradient. F-type ATPases consist of two structural domains, F(1) containing the extramembraneous catalytic core and F(0) containing the membrane proton channel, linked together by a central stalk and a peripheral stalk. During catalysis, ATP synthesis in the catalytic domain of F(1) is coupled via a rotary mechanism of the central stalk subunits to proton translocation. Functionally, component of the F(0) channel, it forms part of the peripheral stalk, linking F(1) to F(0). This is ATP synthase subunit b from Pseudomonas putida (strain ATCC 47054 / DSM 6125 / CFBP 8728 / NCIMB 11950 / KT2440).